The sequence spans 348 residues: Phosphate acyltransferase (348 aa).

This sequence belongs to the PlsX family. Homodimer. Probably interacts with PlsY.

The protein resides in the cytoplasm. It carries out the reaction a fatty acyl-[ACP] + phosphate = an acyl phosphate + holo-[ACP]. The protein operates within lipid metabolism; phospholipid metabolism. In terms of biological role, catalyzes the reversible formation of acyl-phosphate (acyl-PO(4)) from acyl-[acyl-carrier-protein] (acyl-ACP). This enzyme utilizes acyl-ACP as fatty acyl donor, but not acyl-CoA. In Rhizobium etli (strain ATCC 51251 / DSM 11541 / JCM 21823 / NBRC 15573 / CFN 42), this protein is Phosphate acyltransferase.